Reading from the N-terminus, the 189-residue chain is Protein Flattop (189 aa).

The interval 112 to 189 (EISGKPFDPD…PPPSPCKSTK (78 aa)) is disordered. The segment covering 137 to 148 (APNPTIIPSSPV) has biased composition (polar residues). Positions 178–189 (NNPPPSPCKSTK) are enriched in pro residues.

This sequence belongs to the Flattop family. As to quaternary structure, microtubule inner protein component of sperm flagellar doublet microtubules. Interacts with DLG3. In terms of tissue distribution, expressed in mono- and multiciliated tissues during planar cell polarity acquisition.

Its subcellular location is the cytoplasm. It localises to the cytoskeleton. The protein resides in the cilium basal body. The protein localises to the cilium axoneme. It is found in the flagellum axoneme. Its subcellular location is the apical cell membrane. Its function is as follows. Microtubule inner protein (MIP) part of the dynein-decorated doublet microtubules (DMTs) in cilia axoneme. Acts as a regulator of cilium basal body docking and positioning in mono- and multiciliated cells. Regulates basal body docking and cilia formation in multiciliated lung cells. Regulates kinocilium positioning and stereocilia bundle morphogenesis in the inner ear. The chain is Protein Flattop from Mus musculus (Mouse).